We begin with the raw amino-acid sequence, 459 residues long: Cysteine--tRNA ligase (459 aa).

Cys-29 is a Zn(2+) binding site. The 'HIGH' region signature appears at 31-41 (MTVYDLCHLGH). Zn(2+)-binding residues include Cys-213, His-238, and Glu-242. Positions 270–274 (KMSKS) match the 'KMSKS' region motif. Lys-273 is an ATP binding site.

The protein belongs to the class-I aminoacyl-tRNA synthetase family. In terms of assembly, monomer. It depends on Zn(2+) as a cofactor.

The protein localises to the cytoplasm. The enzyme catalyses tRNA(Cys) + L-cysteine + ATP = L-cysteinyl-tRNA(Cys) + AMP + diphosphate. The chain is Cysteine--tRNA ligase from Albidiferax ferrireducens (strain ATCC BAA-621 / DSM 15236 / T118) (Rhodoferax ferrireducens).